Reading from the N-terminus, the 261-residue chain is Pantothenate synthetase (261 aa).

29-36 (MGALHNGH) is a binding site for ATP. The Proton donor role is filled by histidine 36. Residue glutamine 60 participates in (R)-pantoate binding. Glutamine 60 is a binding site for beta-alanine. 147–150 (GEKD) is an ATP binding site. A (R)-pantoate-binding site is contributed by glutamine 153. Position 184 to 187 (184 to 187 (LSSR)) interacts with ATP.

Belongs to the pantothenate synthetase family. In terms of assembly, homodimer.

The protein resides in the cytoplasm. It catalyses the reaction (R)-pantoate + beta-alanine + ATP = (R)-pantothenate + AMP + diphosphate + H(+). It functions in the pathway cofactor biosynthesis; (R)-pantothenate biosynthesis; (R)-pantothenate from (R)-pantoate and beta-alanine: step 1/1. Catalyzes the condensation of pantoate with beta-alanine in an ATP-dependent reaction via a pantoyl-adenylate intermediate. In Francisella tularensis subsp. mediasiatica (strain FSC147), this protein is Pantothenate synthetase.